The sequence spans 71 residues: Sec-independent protein translocase protein TatA (71 aa).

The chain crosses the membrane as a helical span at residues 9-29 (LLLILAIVVILFGASRLPALG). The tract at residues 43-71 (FGGEDEKPTASGNGSTPTQSSSDQGSKQA) is disordered. The span at 52 to 71 (ASGNGSTPTQSSSDQGSKQA) shows a compositional bias: polar residues.

This sequence belongs to the TatA/E family. In terms of assembly, the Tat system comprises two distinct complexes: a TatABC complex, containing multiple copies of TatA, TatB and TatC subunits, and a separate TatA complex, containing only TatA subunits. Substrates initially bind to the TatABC complex, which probably triggers association of the separate TatA complex to form the active translocon.

The protein localises to the cell inner membrane. In terms of biological role, part of the twin-arginine translocation (Tat) system that transports large folded proteins containing a characteristic twin-arginine motif in their signal peptide across membranes. TatA could form the protein-conducting channel of the Tat system. The protein is Sec-independent protein translocase protein TatA of Anaeromyxobacter dehalogenans (strain 2CP-C).